The sequence spans 481 residues: UDP-glucose 6-dehydrogenase (481 aa).

Residues 16 to 21 (GAGYVG), D41, K46, 94 to 98 (VNTPT), 135 to 136 (ST), and E172 contribute to the NAD(+) site. Substrate is bound by residues 168–172 (EFLAE), 227–231 (KLVAN), R267, and 274–280 (QASVGFG). The active-site Nucleophile is the C283. 283-286 (CFQK) provides a ligand contact to NAD(+). 345–346 (FK) contributes to the substrate binding site. Position 353 (R353) interacts with NAD(+). R447 contacts substrate.

The protein belongs to the UDP-glucose/GDP-mannose dehydrogenase family. As to expression, expressed in the vulva and in oocytes.

The enzyme catalyses UDP-alpha-D-glucose + 2 NAD(+) + H2O = UDP-alpha-D-glucuronate + 2 NADH + 3 H(+). It functions in the pathway nucleotide-sugar biosynthesis; UDP-alpha-D-glucuronate biosynthesis; UDP-alpha-D-glucuronate from UDP-alpha-D-glucose: step 1/1. Its function is as follows. Involved in the biosynthesis of glycosaminoglycans; hyaluronan, chondroitin sulfate, and heparan sulfate. This Caenorhabditis elegans protein is UDP-glucose 6-dehydrogenase (sqv-4).